We begin with the raw amino-acid sequence, 264 residues long: Putative HTH-type transcriptional regulator TrmBL2 (264 aa).

The H-T-H motif DNA-binding region spans 33–54 (LTPAELASVSEVPAPRTYDVLR).

Belongs to the transcriptional regulator TrmB family.

Binds to the maltodextrin transport gene cluster (mdxE operon) promoter and to some other TGM (Thermococcales-Glycolytic-Motif) sequences, but not exclusively. The sequence is that of Putative HTH-type transcriptional regulator TrmBL2 (trmBL2) from Pyrococcus furiosus (strain ATCC 43587 / DSM 3638 / JCM 8422 / Vc1).